The chain runs to 142 residues: Large ribosomal subunit protein uL11 (142 aa).

This sequence belongs to the universal ribosomal protein uL11 family. In terms of assembly, part of the ribosomal stalk of the 50S ribosomal subunit. Interacts with L10 and the large rRNA to form the base of the stalk. L10 forms an elongated spine to which L12 dimers bind in a sequential fashion forming a multimeric L10(L12)X complex. One or more lysine residues are methylated.

Functionally, forms part of the ribosomal stalk which helps the ribosome interact with GTP-bound translation factors. The chain is Large ribosomal subunit protein uL11 from Idiomarina loihiensis (strain ATCC BAA-735 / DSM 15497 / L2-TR).